Reading from the N-terminus, the 705-residue chain is Elongation factor G (705 aa).

Residues 8 to 294 (DRYRNFGIMA…AVIDYLPSPL (287 aa)) enclose the tr-type G domain. GTP contacts are provided by residues 17–24 (AHIDAGKT), 92–96 (DTPGH), and 146–149 (NKMD).

This sequence belongs to the TRAFAC class translation factor GTPase superfamily. Classic translation factor GTPase family. EF-G/EF-2 subfamily.

It is found in the cytoplasm. Catalyzes the GTP-dependent ribosomal translocation step during translation elongation. During this step, the ribosome changes from the pre-translocational (PRE) to the post-translocational (POST) state as the newly formed A-site-bound peptidyl-tRNA and P-site-bound deacylated tRNA move to the P and E sites, respectively. Catalyzes the coordinated movement of the two tRNA molecules, the mRNA and conformational changes in the ribosome. This chain is Elongation factor G, found in Dinoroseobacter shibae (strain DSM 16493 / NCIMB 14021 / DFL 12).